The chain runs to 269 residues: MGQNDLMGTAEDFADQFLRVTKQYLPHVARLCLISTFLEDGIRMWFQWSEQRDYIDTTWSCGYLLASSFVFLNLLGQLTGCVLVLSRNFVQYACFGLFGIIALQTIAYSILWDLKFLMRNLALGGGLLLLLAESRSEGKSMFAGVPTMRESSPKQYMQLGGRVLLVLMFMTLLHFDASFFSIIQNIVGTALMILVAIGFKTKLAALTLVVWLFAINVYFNAFWTIPVYKPMHDFLKYDFFQTMSVIGGLLLVVALGPGGVSMDEKKKEW.

5 helical membrane-spanning segments follow: residues 65–85 (LASS…VLVL), 92–112 (YACF…SILW), 179–199 (FFSI…AIGF), 203–223 (LAAL…NAFW), and 242–262 (TMSV…GVSM). The short motif at 266-269 (KKEW) is the Di-lysine motif element.

It belongs to the SURF4 family. In terms of assembly, found in a complex composed at least of SURF4, TMED2 and TMED10. May interact with LMAN1. Interacts with ZFYVE27 and with KIF5A in a ZFYVE27-dependent manner. Interacts with STING1. Interacts with SAR1B. Interacts with TMEM41B.

The protein resides in the endoplasmic reticulum membrane. The protein localises to the endoplasmic reticulum-Golgi intermediate compartment membrane. It is found in the golgi apparatus membrane. Functionally, endoplasmic reticulum cargo receptor that mediates the export of lipoproteins by recruiting cargos into COPII vesicles to facilitate their secretion. Acts as a cargo receptor for lipoproteins bearing both APOB and APOA1, thereby regulating lipoprotein delivery and the maintenance of lipid homeostasis. Synergizes with the GTPase SAR1B to mediate transport of circulating lipoproteins. Promotes the secretion of PCSK9. Also mediates the efficient secretion of erythropoietin (EPO). May also play a role in the maintenance of the architecture of the endoplasmic reticulum-Golgi intermediate compartment and of the Golgi. In Mus musculus (Mouse), this protein is Surfeit locus protein 4.